The sequence spans 179 residues: Large ribosomal subunit protein uL6 (179 aa).

Belongs to the universal ribosomal protein uL6 family. Part of the 50S ribosomal subunit.

Functionally, this protein binds to the 23S rRNA, and is important in its secondary structure. It is located near the subunit interface in the base of the L7/L12 stalk, and near the tRNA binding site of the peptidyltransferase center. The sequence is that of Large ribosomal subunit protein uL6 from Rhodococcus jostii (strain RHA1).